We begin with the raw amino-acid sequence, 436 residues long: Proline--tRNA ligase (436 aa).

It belongs to the class-II aminoacyl-tRNA synthetase family. ProS type 2 subfamily. In terms of assembly, homodimer.

It is found in the cytoplasm. The enzyme catalyses tRNA(Pro) + L-proline + ATP = L-prolyl-tRNA(Pro) + AMP + diphosphate. In terms of biological role, catalyzes the attachment of proline to tRNA(Pro) in a two-step reaction: proline is first activated by ATP to form Pro-AMP and then transferred to the acceptor end of tRNA(Pro). The protein is Proline--tRNA ligase of Neorickettsia sennetsu (strain ATCC VR-367 / Miyayama) (Ehrlichia sennetsu).